The following is a 328-amino-acid chain: P2Y purinoceptor 6 (328 aa).

Over 1–27 (MEWDNGTGQALGLPPTTCVYRENFKQL) the chain is Extracellular. N-linked (GlcNAc...) asparagine glycosylation occurs at Asn5. A helical membrane pass occupies residues 28–48 (LLPPVYSAVLAAGLPLNICVI). Topologically, residues 49–62 (TQICTSRRALTRTA) are cytoplasmic. The helical transmembrane segment at 63–83 (VYTLNLALADLLYACSLPLLI) threads the bilayer. The Extracellular portion of the chain corresponds to 84–101 (YNYAQGDHWPFGDFACRL). Cys99 and Cys177 are joined by a disulfide. The chain crosses the membrane as a helical span at residues 102-122 (VRFLFYANLHGSILFLTCISF). Residues 123-144 (QRYLGICHPLAPWHKRGGRRAA) are Cytoplasmic-facing. The helical transmembrane segment at 145–165 (WLVCVAVWLAVTTQCLPTAIF) threads the bilayer. The Extracellular portion of the chain corresponds to 166-194 (AATGIQRNRTVCYDLSPPALATHYMPYGM). The helical transmembrane segment at 195–215 (ALTVIGFLLPFAALLACYCLL) threads the bilayer. The Cytoplasmic segment spans residues 216 to 236 (ACRLCRQDGPAEPVAQERRGK). Residues 237-257 (AARMAVVVAAAFAISFLPFHI) form a helical membrane-spanning segment. Topologically, residues 258–280 (TKTAYLAVRSTPGVPCTVLEAFA) are extracellular. Residues 281-303 (AAYKGTRPFASANSVLDPILFYF) traverse the membrane as a helical segment. Topologically, residues 304-328 (TQKKFRRRPHELLQKLTAKWQRQGR) are cytoplasmic.

This sequence belongs to the G-protein coupled receptor 1 family.

The protein resides in the cell membrane. In terms of biological role, receptor for extracellular UDP &gt; UTP &gt; ATP. The activity of this receptor is mediated by G proteins which activate a phosphatidylinositol-calcium second messenger system. The sequence is that of P2Y purinoceptor 6 (P2RY6) from Homo sapiens (Human).